The following is a 203-amino-acid chain: Small ribosomal subunit protein uS4 (203 aa).

The S4 RNA-binding domain maps to 93–173 (RRFDNVVFRA…IPSWIQVDKA (81 aa)).

It belongs to the universal ribosomal protein uS4 family. In terms of assembly, part of the 30S ribosomal subunit. Contacts protein S5. The interaction surface between S4 and S5 is involved in control of translational fidelity.

Its function is as follows. One of the primary rRNA binding proteins, it binds directly to 16S rRNA where it nucleates assembly of the body of the 30S subunit. Functionally, with S5 and S12 plays an important role in translational accuracy. This Pelodictyon phaeoclathratiforme (strain DSM 5477 / BU-1) protein is Small ribosomal subunit protein uS4.